The following is a 133-amino-acid chain: Protein archease (133 aa).

Ca(2+) contacts are provided by Asp-11, Asp-132, and Leu-133.

This sequence belongs to the archease family.

Activates the tRNA-splicing ligase complex by facilitating the enzymatic turnover of catalytic subunit RtcB. Acts by promoting the guanylylation of RtcB, a key intermediate step in tRNA ligation. Can also alter the NTP specificity of RtcB such that ATP, dGTP or ITP is used efficiently. The polypeptide is Protein archease (Thermoplasma volcanium (strain ATCC 51530 / DSM 4299 / JCM 9571 / NBRC 15438 / GSS1)).